The sequence spans 404 residues: Cysteine desulfurase IscS (404 aa).

Residues 75–76 (AT), N155, Q183, and 203–205 (SAH) each bind pyridoxal 5'-phosphate. K206 carries the N6-(pyridoxal phosphate)lysine modification. Pyridoxal 5'-phosphate is bound at residue T243. The active-site Cysteine persulfide intermediate is the C328. C328 lines the [2Fe-2S] cluster pocket.

This sequence belongs to the class-V pyridoxal-phosphate-dependent aminotransferase family. NifS/IscS subfamily. In terms of assembly, homodimer. Forms a heterotetramer with IscU, interacts with other sulfur acceptors. It depends on pyridoxal 5'-phosphate as a cofactor.

Its subcellular location is the cytoplasm. It catalyses the reaction (sulfur carrier)-H + L-cysteine = (sulfur carrier)-SH + L-alanine. Its pathway is cofactor biosynthesis; iron-sulfur cluster biosynthesis. Functionally, master enzyme that delivers sulfur to a number of partners involved in Fe-S cluster assembly, tRNA modification or cofactor biosynthesis. Catalyzes the removal of elemental sulfur atoms from cysteine to produce alanine. Functions as a sulfur delivery protein for Fe-S cluster synthesis onto IscU, an Fe-S scaffold assembly protein, as well as other S acceptor proteins. In Pseudomonas syringae pv. syringae (strain B728a), this protein is Cysteine desulfurase IscS.